Consider the following 627-residue polypeptide: Chaperone protein DnaK (627 aa).

Threonine 197 is modified (phosphothreonine; by autocatalysis). The segment covering 596-615 (MYAQGGDQGQQAAPQQEQSG) has biased composition (low complexity). Residues 596 to 627 (MYAQGGDQGQQAAPQQEQSGDNVEDVEFEEVK) form a disordered region. The span at 617-627 (NVEDVEFEEVK) shows a compositional bias: acidic residues.

Belongs to the heat shock protein 70 family.

Its function is as follows. Acts as a chaperone. The protein is Chaperone protein DnaK of Flavobacterium johnsoniae (strain ATCC 17061 / DSM 2064 / JCM 8514 / BCRC 14874 / CCUG 350202 / NBRC 14942 / NCIMB 11054 / UW101) (Cytophaga johnsonae).